The following is a 140-amino-acid chain: uncharacterized protein (140 aa).

Asn86 is a glycosylation site (N-linked (GlcNAc...) asparagine; by host). A helical membrane pass occupies residues 92-112; that stretch reads IFNGLGFILIVIFIYLLLITL.

The protein belongs to the asfivirus B117L family.

The protein resides in the host membrane. The protein localises to the virion. This is an uncharacterized protein from African swine fever virus (isolate Pig/Kenya/KEN-50/1950) (ASFV).